Reading from the N-terminus, the 405-residue chain is Protein NCA1 (405 aa).

The interval 1-85 (MTTTSVCPFS…GNLNKDSTDS (85 aa)) is disordered. Composition is skewed to basic and acidic residues over residues 13-24 (ARPDDGSTRKQG) and 37-48 (ARPDDASARKQG). A compositionally biased stretch (polar residues) spans 76-85 (GNLNKDSTDS). The RING-type zinc-finger motif lies at 108 to 142 (CMLCQALLYESSRCVPCTHVFCKVCLTRFKDCPLC). TPR repeat units follow at residues 247–280 (GAVLGMLGDCSRAMGDSSSAVKHFEESVEFLMKL) and 292–325 (SVSLNKIGDLKYYDEDLQAARSYYDRALNVRRDA).

Interacts with the catalases CAT1, CAT2 and CAT3. This interaction is not induced by alkaline stress or H(2)O(2) and NaCl treatments. Expressed in roots, stems, leaves, flowers and siliques.

The protein resides in the cytoplasm. It is found in the nucleus. Has holdase chaperone activity that may fold catalase to a functional structure. Not required for the peroxisome import of catalases. Required for the activity of catalases and acts mainly at the post-transcriptional level. This Arabidopsis thaliana (Mouse-ear cress) protein is Protein NCA1.